A 479-amino-acid chain; its full sequence is MASIAEMQKPHAICIPYPAQGHINPMMQFAKLLHFKGFHISFVNNHYNHKRLQRSRGLSALEGLPDFHFYSIPDGLPPSNAEATQSIPGLCESIPKHSLEPFCDLIATLNGSDVPPVSCIISDGVMSFTLQAAERFGLPEVLFWTPSACGFLAYTHYRDLVDKEYIPLKDTNDLTNGYLETSLDWIPGMKNIRLKDFPSFIRTTDINDIMLNYFLIETEAIPKGVAIILNTFDALEKDSITPVLALNPQIYTIGPLHMMQQYVDHDERLKHIGSNLWKEDVSCINWLDTKKPNSVVYVNFGSITVMTKEQLIEFGWGLANSKKDFLWITRPDIVGGNEAMIPAEFIEETKERGMVTSWCSQEEVLKHPSIGVFLTHSGWNSTIESISNGVPMICWPFFAEQQTNCRYCCVEWEIGLEIDTDVKREEVEAQVREMMDGSKGKMMKNKALEWKKKAEEAVSIGGSSYLNFEKLVTDVLLRK.

UDP-alpha-D-glucose-binding positions include Ser-302, 358–359 (WC), 376–384 (HSGWNSTIE), and 398–401 (FAEQ).

This sequence belongs to the UDP-glycosyltransferase family.

In terms of biological role, may glycosylate diterpenes or flavonols in leaves. This is UDP-glycosyltransferase 85A8 from Stevia rebaudiana (Stevia).